The sequence spans 20 residues: Putative antimicrobial protein 2 (20 aa).

The interval 1 to 20 (DLPECCSATELELDSGKQTS) is disordered.

Its function is as follows. May have antimicrobial activity. This chain is Putative antimicrobial protein 2, found in Cenchritis muricatus (Beaded periwinkle).